The primary structure comprises 695 residues: Methionine synthase reductase (695 aa).

The Flavodoxin-like domain maps to 4–147; sequence FLLLYATQRG…VVEPWINGLW (144 aa). FMN contacts are provided by residues 10–14 and 93–124; these read TQRGQ and LLGL…QRFY. The interval 166 to 245 is hinge; it reads TLTMASHASR…ASLNIPSLPP (80 aa). Serine 171 and serine 187 each carry phosphoserine. One can recognise an FAD-binding FR-type domain in the interval 269-531; that stretch reads DPVFHVPVSK…PRTTNSFHLP (263 aa). Lysine 289 is an NADP(+) binding site. FAD contacts are provided by residues 449 to 452 and 485 to 488; these read RPYS and GVCT. Residues 608-609, 622-624, and aspartate 657 contribute to the NADP(+) site; these read SR and YVQ. Tryptophan 695 lines the FAD pocket.

In terms of assembly, forms a multiprotein complex with MMACHC, MMADHC and MTR. It depends on FAD as a cofactor. FMN is required as a cofactor.

It is found in the cytoplasm. It carries out the reaction 2 methylcob(III)alamin-[methionine synthase] + 2 S-adenosyl-L-homocysteine + NADP(+) + H(+) = 2 cob(II)alamin-[methionine synthase] + 2 S-adenosyl-L-methionine + NADPH. The enzyme catalyses 2 cob(II)alamin + A + 2 H2O + 2 H(+) = 2 aquacob(III)alamin + AH2. Its function is as follows. Key enzyme in methionine and folate homeostasis responsible for the reactivation of methionine synthase (MTR/MS) activity by catalyzing the reductive methylation of MTR-bound cob(II)alamin. Cobalamin (vitamin B12) forms a complex with MTR to serve as an intermediary in methyl transfer reactions that cycles between MTR-bound methylcob(III)alamin and MTR bound-cob(I)alamin forms, and occasional oxidative escape of the cob(I)alamin intermediate during the catalytic cycle leads to the inactive cob(II)alamin species. The processing of cobalamin in the cytosol occurs in a multiprotein complex composed of at least MMACHC, MMADHC, MTRR and MTR which may contribute to shuttle safely and efficiently cobalamin towards MTR in order to produce methionine. Also necessary for the utilization of methyl groups from the folate cycle, thereby affecting transgenerational epigenetic inheritance. Also acts as a molecular chaperone for methionine synthase by stabilizing apoMTR and incorporating methylcob(III)alamin into apoMTR to form the holoenzyme. Also serves as an aquacob(III)alamin reductase by reducing aquacob(III)alamin to cob(II)alamin; this reduction leads to stimulation of the conversion of apoMTR and aquacob(III)alamin to MTR holoenzyme. The polypeptide is Methionine synthase reductase (MTRR) (Bos taurus (Bovine)).